Consider the following 422-residue polypeptide: Hexuronate transporter (422 aa).

11 consecutive transmembrane segments (helical) span residues 9 to 29, 45 to 65, 82 to 102, 141 to 161, 163 to 183, 219 to 239, 256 to 276, 294 to 314, 321 to 341, 356 to 376, and 381 to 401; these read VILFLFLAGVINYLDRSALSI, MGLIFSSFSIGYAIFNFLGGV, VWSLFSGAVALAFGFVSLLII, TPLGGAISGPIVGMIAVAFSW, VSFVLIMIIGLIWAVLWFKFV, LFTAFAFFAYNYILFFFLTWF, VITVIPWILGFIGLAAGGFVS, VVLVTCLFSSAVLIGFAGLVA, TLVALSVFFLYLTGAIYWAVI, FMHFLANTAGIIGPALTGFIV, and TFSGAFLLAGGLAVFASLAVI.

It belongs to the major facilitator superfamily. Phthalate permease family.

Its subcellular location is the cell membrane. It catalyses the reaction aldehydo-D-glucuronate(in) + H(+)(in) = aldehydo-D-glucuronate(out) + H(+)(out). The enzyme catalyses aldehydo-D-galacturonate(out) + H(+)(out) = aldehydo-D-galacturonate(in) + H(+)(in). Transport of aldohexuronates such as D-glucuronate and D-galacturonate. The chain is Hexuronate transporter from Bacillus subtilis (strain 168).